Consider the following 421-residue polypeptide: Gamma-glutamyl phosphate reductase (421 aa).

It belongs to the gamma-glutamyl phosphate reductase family.

The protein resides in the cytoplasm. The enzyme catalyses L-glutamate 5-semialdehyde + phosphate + NADP(+) = L-glutamyl 5-phosphate + NADPH + H(+). It participates in amino-acid biosynthesis; L-proline biosynthesis; L-glutamate 5-semialdehyde from L-glutamate: step 2/2. Catalyzes the NADPH-dependent reduction of L-glutamate 5-phosphate into L-glutamate 5-semialdehyde and phosphate. The product spontaneously undergoes cyclization to form 1-pyrroline-5-carboxylate. The sequence is that of Gamma-glutamyl phosphate reductase from Herminiimonas arsenicoxydans.